Reading from the N-terminus, the 316-residue chain is 1-aminocyclopropane-1-carboxylate oxidase 2 (316 aa).

Residues 153 to 253 form the Fe2OG dioxygenase domain; the sequence is PNFGTKVSNY…RMSLASFYNP (101 aa). Residues histidine 177, aspartate 179, and histidine 234 each coordinate Fe cation.

It belongs to the iron/ascorbate-dependent oxidoreductase family. Requires Fe cation as cofactor. Leaves.

It catalyses the reaction 1-aminocyclopropane-1-carboxylate + L-ascorbate + O2 = ethene + L-dehydroascorbate + hydrogen cyanide + CO2 + 2 H2O. The protein operates within alkene biosynthesis; ethylene biosynthesis via S-adenosyl-L-methionine; ethylene from S-adenosyl-L-methionine: step 2/2. This chain is 1-aminocyclopropane-1-carboxylate oxidase 2 (ACO2), found in Solanum lycopersicum (Tomato).